The primary structure comprises 582 residues: 5-aminolevulinate synthase, erythroid-specific, mitochondrial (582 aa).

Residues 1–44 constitute a mitochondrion transit peptide; it reads MLLQRCPVLIRSPTAILGKMIKTHQFLIGIGRCPILATQGTTCS. Arginine 158 contributes to the succinyl-CoA binding site. Cysteine 253 and phenylalanine 254 together coordinate pyridoxal 5'-phosphate. Positions 275 and 294 each coordinate succinyl-CoA. Serine 327, histidine 355, and threonine 383 together coordinate pyridoxal 5'-phosphate. The active site involves lysine 386. N6-(pyridoxal phosphate)lysine is present on lysine 386. Residues threonine 415 and threonine 416 each coordinate pyridoxal 5'-phosphate. Threonine 503 serves as a coordination point for succinyl-CoA.

The protein belongs to the class-II pyridoxal-phosphate-dependent aminotransferase family. As to quaternary structure, homodimer. Pyridoxal 5'-phosphate serves as cofactor.

The protein resides in the mitochondrion inner membrane. It carries out the reaction succinyl-CoA + glycine + H(+) = 5-aminolevulinate + CO2 + CoA. It functions in the pathway porphyrin-containing compound metabolism; protoporphyrin-IX biosynthesis; 5-aminolevulinate from glycine: step 1/1. In terms of biological role, catalyzes the pyridoxal 5'-phosphate (PLP)-dependent condensation of succinyl-CoA and glycine to form aminolevulinic acid (ALA), with CoA and CO2 as by-products. Contributes significantly to heme formation during erythropoiesis. The chain is 5-aminolevulinate synthase, erythroid-specific, mitochondrial (ALAS2) from Delphinapterus leucas (Beluga whale).